Consider the following 477-residue polypeptide: Protoporphyrinogen oxidase (477 aa).

FAD contacts are provided by residues 9-14 (GGGISG), Trp-42, 57-60 (GPRG), Val-257, Ala-449, and 454-456 (VAV).

This sequence belongs to the protoporphyrinogen/coproporphyrinogen oxidase family. Protoporphyrinogen oxidase subfamily. In terms of assembly, monomer. Homodimer. The cofactor is FAD. Detected in liver (at protein level).

The protein resides in the mitochondrion inner membrane. The enzyme catalyses protoporphyrinogen IX + 3 O2 = protoporphyrin IX + 3 H2O2. It participates in porphyrin-containing compound metabolism; protoporphyrin-IX biosynthesis; protoporphyrin-IX from protoporphyrinogen-IX: step 1/1. Functionally, catalyzes the 6-electron oxidation of protoporphyrinogen-IX to form protoporphyrin-IX. This Bos taurus (Bovine) protein is Protoporphyrinogen oxidase (PPOX).